The sequence spans 350 residues: Protein-glutamate methylesterase/protein-glutamine glutaminase (350 aa).

Positions 5–122 constitute a Response regulatory domain; the sequence is RVLSVDDSAL…REGMLAYSEM (118 aa). Residue aspartate 56 is modified to 4-aspartylphosphate. The CheB-type methylesterase domain occupies 152-338; the sequence is LLSSEKLLVI…DLSQVVSQQM (187 aa). Residues serine 164, histidine 190, and aspartate 286 contribute to the active site.

The protein belongs to the CheB family. Phosphorylated by CheA. Phosphorylation of the N-terminal regulatory domain activates the methylesterase activity.

Its subcellular location is the cytoplasm. The enzyme catalyses [protein]-L-glutamate 5-O-methyl ester + H2O = L-glutamyl-[protein] + methanol + H(+). It catalyses the reaction L-glutaminyl-[protein] + H2O = L-glutamyl-[protein] + NH4(+). Its function is as follows. Involved in chemotaxis. Part of a chemotaxis signal transduction system that modulates chemotaxis in response to various stimuli. Catalyzes the demethylation of specific methylglutamate residues introduced into the chemoreceptors (methyl-accepting chemotaxis proteins or MCP) by CheR. Also mediates the irreversible deamidation of specific glutamine residues to glutamic acid. This is Protein-glutamate methylesterase/protein-glutamine glutaminase from Enterobacter cloacae.